A 502-amino-acid polypeptide reads, in one-letter code: Protein krueppel (502 aa).

Disordered regions lie at residues 115–164 (PPQG…KLSV) and 178–202 (DMYH…THDG). Composition is skewed to low complexity over residues 119–136 (THLH…STPL) and 183–198 (SGGP…SPNS). 5 consecutive C2H2-type zinc fingers follow at residues 222–244 (FTCK…ERTH), 250–272 (FECP…MRLH), 278–300 (YHCS…LRVH), 306–328 (YTCE…MLVH), and 334–354 (FECE…NHKC). Disordered stretches follow at residues 399–427 (NESV…SVDG) and 445–502 (RLPP…HQQH). Acidic residues predominate over residues 410-419 (EDDGPLDLSE). Residues serine 468, serine 471, and serine 477 each carry the phosphoserine modification. Residues 482-491 (DDIDLYDLDD) show a composition bias toward acidic residues.

It belongs to the krueppel C2H2-type zinc-finger protein family.

It localises to the nucleus. Krueppel is a gap class segmentation protein. It is involved in the segmentation of the embryo and in the differentiation of the Malpighian tubules. This is Protein krueppel (Kr) from Drosophila melanogaster (Fruit fly).